Here is a 208-residue protein sequence, read N- to C-terminus: Bacitracin transport permease protein BCRB (208 aa).

6 helical membrane passes run 23–43 (LYIVLLIGVPLYGVITSYLFN), 70–90 (VLLLIWIMMLTLIAWVLTLLF), 111–131 (FMIGGALLFFLVSPIIFVTLL), 135–155 (YVPTIIFTIIISMVSIMVYGT), 159–179 (ALFPWSAVWVIASGTFFPEYP), and 182–202 (YSFISVAATTVLGLAATIVYF).

It localises to the cell membrane. Its function is as follows. Part of the binding-protein-dependent transport system for bacitracin that confer resistance to this antibiotic; probably responsible for the translocation of the substrate across the membrane. This chain is Bacitracin transport permease protein BCRB (bcrB), found in Bacillus licheniformis.